The sequence spans 126 residues: Large ribosomal subunit protein bL19 (126 aa).

The protein belongs to the bacterial ribosomal protein bL19 family.

Functionally, this protein is located at the 30S-50S ribosomal subunit interface and may play a role in the structure and function of the aminoacyl-tRNA binding site. The chain is Large ribosomal subunit protein bL19 from Prochlorococcus marinus (strain MIT 9312).